The following is a 257-amino-acid chain: Phosphate import ATP-binding protein PstB (257 aa).

Positions 11-252 (IQVRDLNFYY…PAKKQTEDYI (242 aa)) constitute an ABC transporter domain. 43–50 (GPSGCGKS) is a binding site for ATP.

This sequence belongs to the ABC transporter superfamily. Phosphate importer (TC 3.A.1.7) family. In terms of assembly, the complex is composed of two ATP-binding proteins (PstB), two transmembrane proteins (PstC and PstA) and a solute-binding protein (PstS).

The protein resides in the cell inner membrane. It catalyses the reaction phosphate(out) + ATP + H2O = ADP + 2 phosphate(in) + H(+). Functionally, part of the ABC transporter complex PstSACB involved in phosphate import. Responsible for energy coupling to the transport system. The chain is Phosphate import ATP-binding protein PstB from Enterobacter cloacae.